A 604-amino-acid polypeptide reads, in one-letter code: Inactive all-trans-retinol 13,14-reductase (604 aa).

The first 17 residues, 1 to 17, serve as a signal peptide directing secretion; it reads MWWILLFLEWFVDWARG.

It belongs to the carotenoid/retinoid oxidoreductase family. CrtISO subfamily.

The protein is Inactive all-trans-retinol 13,14-reductase (retsatl) of Danio rerio (Zebrafish).